A 238-amino-acid polypeptide reads, in one-letter code: Ribosomal RNA small subunit methyltransferase G (238 aa).

Residues Gly-106, Leu-111, 157-158, and Arg-170 contribute to the S-adenosyl-L-methionine site; that span reads IE.

This sequence belongs to the methyltransferase superfamily. RNA methyltransferase RsmG family.

The protein localises to the cytoplasm. The enzyme catalyses guanosine(527) in 16S rRNA + S-adenosyl-L-methionine = N(7)-methylguanosine(527) in 16S rRNA + S-adenosyl-L-homocysteine. Its function is as follows. Specifically methylates the N7 position of guanine in position 527 of 16S rRNA. The protein is Ribosomal RNA small subunit methyltransferase G of Psychrobacter arcticus (strain DSM 17307 / VKM B-2377 / 273-4).